The chain runs to 275 residues: Homeobox-leucine zipper protein ATHB-17 (275 aa).

Residues 95 to 143 are disordered; it reads SSPLSDEGSGGGRDQLRLDMNRLPSSEDGDDEEFSHDDGSAPPRKKLRL. The homeobox DNA-binding region spans 136 to 195; the sequence is PPRKKLRLTREQSRLLEDSFRQNHTLNPKQKEVLAKHLMLRPRQIEVWFQNRRARSKLKQ. Residues 203–224 form a leucine-zipper region; that stretch reads LKRWFGSLTEENHRLHREVEEL. The tract at residues 252-275 is disordered; that stretch reads AASPSRAVVPVPAKKTFPPQERDR.

The protein belongs to the HD-ZIP homeobox family. Class II subfamily.

The protein resides in the nucleus. Probable transcription factor. The protein is Homeobox-leucine zipper protein ATHB-17 (ATHB-17) of Arabidopsis thaliana (Mouse-ear cress).